Consider the following 946-residue polypeptide: Bifunctional glutamine synthetase adenylyltransferase/adenylyl-removing enzyme (946 aa).

The tract at residues 1–440 is adenylyl removase; sequence MKPLSSPLQQ…VFNELIGDDE (440 aa). The segment at 449-946 is adenylyl transferase; that stretch reads SEQWRELWQD…ASWQKWLVEE (498 aa).

Belongs to the GlnE family. Mg(2+) is required as a cofactor.

The catalysed reaction is [glutamine synthetase]-O(4)-(5'-adenylyl)-L-tyrosine + phosphate = [glutamine synthetase]-L-tyrosine + ADP. The enzyme catalyses [glutamine synthetase]-L-tyrosine + ATP = [glutamine synthetase]-O(4)-(5'-adenylyl)-L-tyrosine + diphosphate. Functionally, involved in the regulation of glutamine synthetase GlnA, a key enzyme in the process to assimilate ammonia. When cellular nitrogen levels are high, the C-terminal adenylyl transferase (AT) inactivates GlnA by covalent transfer of an adenylyl group from ATP to specific tyrosine residue of GlnA, thus reducing its activity. Conversely, when nitrogen levels are low, the N-terminal adenylyl removase (AR) activates GlnA by removing the adenylyl group by phosphorolysis, increasing its activity. The regulatory region of GlnE binds the signal transduction protein PII (GlnB) which indicates the nitrogen status of the cell. The protein is Bifunctional glutamine synthetase adenylyltransferase/adenylyl-removing enzyme of Escherichia coli (strain SE11).